The chain runs to 459 residues: Glutamyl-tRNA reductase (459 aa).

Substrate is bound by residues 49–52, Ser109, 114–116, and Gln120; these read TCNR and EQQ. The active-site Nucleophile is the Cys50. 189–194 contacts NADP(+); sequence GAGAMG.

The protein belongs to the glutamyl-tRNA reductase family. In terms of assembly, homodimer.

The catalysed reaction is (S)-4-amino-5-oxopentanoate + tRNA(Glu) + NADP(+) = L-glutamyl-tRNA(Glu) + NADPH + H(+). The protein operates within porphyrin-containing compound metabolism; protoporphyrin-IX biosynthesis; 5-aminolevulinate from L-glutamyl-tRNA(Glu): step 1/2. Catalyzes the NADPH-dependent reduction of glutamyl-tRNA(Glu) to glutamate 1-semialdehyde (GSA). The chain is Glutamyl-tRNA reductase from Mycolicibacterium paratuberculosis (strain ATCC BAA-968 / K-10) (Mycobacterium paratuberculosis).